A 293-amino-acid chain; its full sequence is uncharacterized protein (293 aa).

Over residues 1–10 (MHMQLRKRKR) the composition is skewed to basic residues. The disordered stretch occupies residues 1–28 (MHMQLRKRKRVDYSGRNQTSDPPSTTTA). Residues 15–28 (GRNQTSDPPSTTTA) show a composition bias toward polar residues.

Its subcellular location is the nucleus. This is an uncharacterized protein from Saccharomyces cerevisiae (strain ATCC 204508 / S288c) (Baker's yeast).